A 193-amino-acid chain; its full sequence is Lipopolysaccharide core heptose(II)-phosphate phosphatase (193 aa).

A signal peptide spans 1-25 (MKLKKHVAVLLISFLCLIGLVTQHA).

It belongs to the phosphoglycerate mutase family. Ais subfamily.

Its subcellular location is the periplasm. It functions in the pathway bacterial outer membrane biogenesis; lipopolysaccharide metabolism. Catalyzes the dephosphorylation of heptose(II) of the outer membrane lipopolysaccharide core. In Escherichia fergusonii (strain ATCC 35469 / DSM 13698 / CCUG 18766 / IAM 14443 / JCM 21226 / LMG 7866 / NBRC 102419 / NCTC 12128 / CDC 0568-73), this protein is Lipopolysaccharide core heptose(II)-phosphate phosphatase.